The sequence spans 469 residues: UDP-N-acetylmuramate--L-alanine ligase (469 aa).

Position 118-124 (118-124 (GTHGKTT)) interacts with ATP.

The protein belongs to the MurCDEF family.

The protein resides in the cytoplasm. The enzyme catalyses UDP-N-acetyl-alpha-D-muramate + L-alanine + ATP = UDP-N-acetyl-alpha-D-muramoyl-L-alanine + ADP + phosphate + H(+). It participates in cell wall biogenesis; peptidoglycan biosynthesis. In terms of biological role, cell wall formation. This is UDP-N-acetylmuramate--L-alanine ligase from Lachnoclostridium phytofermentans (strain ATCC 700394 / DSM 18823 / ISDg) (Clostridium phytofermentans).